Consider the following 304-residue polypeptide: Probable 5-dehydro-4-deoxyglucarate dehydratase (304 aa).

It belongs to the DapA family.

The enzyme catalyses 5-dehydro-4-deoxy-D-glucarate + H(+) = 2,5-dioxopentanoate + CO2 + H2O. It participates in carbohydrate acid metabolism; D-glucarate degradation; 2,5-dioxopentanoate from D-glucarate: step 2/2. This is Probable 5-dehydro-4-deoxyglucarate dehydratase from Pseudarthrobacter chlorophenolicus (strain ATCC 700700 / DSM 12829 / CIP 107037 / JCM 12360 / KCTC 9906 / NCIMB 13794 / A6) (Arthrobacter chlorophenolicus).